The following is a 780-amino-acid chain: MATSNLLKNKGSLQFEDKWDFMRPIVLKLLRQESVTKQQWFDLFSDVHAVCLWDDKGPAKIHQALKEDILEFIKQAQARVLSHQDDTALLKAYIVEWRKFFTQCDILPKPFCQLEITLMGKQGSNKKSNVEDSIVRKLMLDTWNESIFSNIKNRLQDSAMKLVHAERLGEAFDSQLVIGVRESYVNLCSNPEDKLQIYRDNFEKAYLDSTERFYRTQAPSYLQQNGVQNYMKYADAKLKEEEKRALRYLETRRECNSVEALMECCVNALVTSFKETILAECQGMIKRNETEKLHLMFSLMDKVPNGIEPMLKDLEEHIISAGLADMVAAAETITTDSEKYVEQLLTLFNRFSKLVKEAFQDDPRFLTARDKAYKAVVNDATIFKLELPLKQKGVGLKTQPESKCPELLAIYCDMLLRKTPLSKKLTSEEIEAKLKEVLLVLKYVQNKDVFMRYHKAHLTRRLILDISADSEIEENMVEWLREVGMPADYVNKLARMFQDIKVSEDLNQAFKEMHKNNKLALPADSVNIKILNAGAWSRSSEKVFVSLPTELEDLIPEVEEFYKKNHSGRKLHWHHLMSNGIITFKNEVGQYDLEVTTFQLAVLFAWNQRPREKISFENLKLATELPDAELRRTLWSLVAFPKLKRQVLLYEPQVNSPKDFTEGTLFSVNQEFSLIKNAKVQKRGKINLIGRLQLTTERMREEENEGIVQLRILRTQEAIIQIMKMRKKISNAQLQTELVEILKNMFLPQKKMIKEQIEWLIEHKYIRRDESDINTFIYMA.

Residue Ser-34 is modified to Phosphoserine. Phosphothreonine is present on Thr-210. Positions 711–772 (RILRTQEAII…HKYIRRDESD (62 aa)) constitute a Cullin neddylation domain. Lys-724 participates in a covalent cross-link: Glycyl lysine isopeptide (Lys-Gly) (interchain with G-Cter in NEDD8).

It belongs to the cullin family. Component of multiple cullin-5-RING E3 ubiquitin-protein ligase complexes (ECS complexes, also named CRL5 complexes) formed of CUL5, Elongin BC (ELOB and ELOC), RNF7/RBX2 and a variable SOCS box domain-containing protein as substrate-specific recognition component. CUL5-containing ECS complexes specifically contain RNF7/RBX2, and not RBX1, as catalytic subunit. Component of the ECS(ASB2) complex with the substrate recognition component ASB2. Component of the ECS(ASB6) complex with the substrate recognition component ASB6. Component of the ECS(ASB7) complex with the substrate recognition component ASB7. Component of the ECS(ASB9) complex with the substrate recognition component ASB9. Component of the ECS(ASB11) complex with the substrate recognition component ASB11. Component of the ECS(ASB12) complex with the substrate recognition component ASB12. Component of the ECS(LRRC41) complex with the substrate recognition component LRRC41. Component of the ECS(SOCS1) complex with the substrate recognition component SOCS1. Component of the ECS(SOCS2) complex with the substrate recognition component SOCS2. Component of the ECS(WSB1) complex with the substrate recognition subunit WSB1. Component of the ECS(SOCS3) complex with the substrate recognition component SOCS3. Component of the ECS(SOCS7) complex with the substrate recognition component SOCS7. Component of the ECS(SPSB1) complex with the substrate recognition component SPSB1. Component of the ECS(SPSB3) complex with the substrate recognition component SPSB3. Component of the ECS(SPSB2) complex with the substrate recognition component SPSB2. Component of the ECS(SPSB4) complex with the substrate recognition component SPSB4. Component of the ECS(RAB40) complex with the substrate recognition subunit RAB40A, RAB40B or RAB40C. Component of the ECS(KLHDC1) complex with the substrate recognition component KLHDC1. Component of the ECS(PCMTD1) complex with the substrate recognition subunit PCMTD1. May also form complexes containing RBX1 and ELOA or VHL; additional evidence is however required to confirm this result in vivo. Interacts (when neddylated) with ARIH2; leading to activate the E3 ligase activity of ARIH2. Interacts with ERCC6; the interaction is induced by DNA damaging agents or inhibitors of RNA polymerase II elongation. Interacts with ELOA (via the BC-box). Interacts (unneddylated form) with DCUN1D1, DCUN1D2, DCUN1D3, DCUN1D4 and DCUN1D5; these interactions promote the cullin neddylation. In terms of processing, neddylated; which enhances the ubiquitination activity of ECS complexes and prevents binding of the inhibitor CAND1. Deneddylated via its interaction with the COP9 signalosome (CSN).

The protein localises to the nucleus. Its pathway is protein modification; protein ubiquitination. In terms of biological role, core component of multiple cullin-5-RING E3 ubiquitin-protein ligase complexes (ECS complexes, also named CRL5 complexes), which mediate the ubiquitination and subsequent proteasomal degradation of target proteins. Acts a scaffold protein that contributes to catalysis through positioning of the substrate and the ubiquitin-conjugating enzyme. The functional specificity of the E3 ubiquitin-protein ligase complex depends on the variable SOCS box-containing substrate recognition component. Acts as a key regulator of neuron positioning during cortex development: component of various SOCS-containing ECS complexes, such as the ECS(SOCS7) complex, that regulate reelin signaling by mediating ubiquitination and degradation of DAB1. ECS(SOCS1) seems to direct ubiquitination of JAK2. The ECS(SOCS2) complex mediates the ubiquitination and subsequent proteasomal degradation of phosphorylated EPOR and GHR. The ECS(SPSB3) complex catalyzes ubiquitination of nuclear CGAS. ECS(KLHDC1) complex is part of the DesCEND (destruction via C-end degrons) pathway and mediates ubiquitination and degradation of truncated SELENOS selenoprotein produced by failed UGA/Sec decoding, which ends with a glycine. The ECS(ASB9) complex mediates ubiquitination and degradation of CKB. As part of some ECS complex, promotes 'Lys-11'-linked ubiquitination and degradation of BTRC. As part of a multisubunit ECS complex, polyubiquitinates monoubiquitinated POLR2A. As part of the ECS(RAB40C) complex, mediates ANKRD28 ubiquitination and degradation, thereby regulating protein phosphatase 6 (PP6) complex activity and focal adhesion assembly during cell migration. As part of the ECS(RAB40A) complex, mediates RHOU 'Lys-48'-linked ubiquitination and degradation, thus inhibiting focal adhesion disassembly during cell migration. As part of the ECS(RAB40B) complex, mediates LIMA1/EPLIN and RAP2 ubiquitination, thereby regulating actin cytoskeleton dynamics and stress fiber formation during cell migration. May form a cell surface vasopressin receptor. This is Cullin-5 from Pongo abelii (Sumatran orangutan).